The following is a 48-amino-acid chain: Large ribosomal subunit protein bL36c (48 aa).

This sequence belongs to the bacterial ribosomal protein bL36 family.

It localises to the plastid. Its subcellular location is the chloroplast. This Guillardia theta (Cryptophyte) protein is Large ribosomal subunit protein bL36c (rpl36).